An 819-amino-acid polypeptide reads, in one-letter code: Putative U-box domain-containing protein 53 (819 aa).

Disordered stretches follow at residues 208 to 309 and 398 to 433; these read TSDT…NPQF and KETE…KEKL. A compositionally biased stretch (low complexity) spans 223 to 237; that stretch reads ERTSSSCSSGSGANS. A compositionally biased stretch (polar residues) spans 238 to 260; it reads DVMSNALKSNPHTLSNKRMQNLP. Residues 278–296 are compositionally biased toward basic and acidic residues; the sequence is DETKKRSSDAAEEASKRSS. Positions 297–307 are enriched in polar residues; sequence PETSRSVSWNP. Residues 395 to 437 adopt a coiled-coil conformation; the sequence is IAKKETEKFEQKRREEREAAQRREAEMKATHEAKEKEKLEESS. One can recognise a Protein kinase domain in the interval 460 to 728; it reads FSEDLKIGMG…DLEDQILPVL (269 aa). Residues 466–474 and K487 contribute to the ATP site; that span reads IGMGAYGDV. The active-site Proton acceptor is the D582. Residues 748–819 enclose the U-box domain; sequence QPPSHFFCPL…AIVEWRNRNQ (72 aa).

This sequence belongs to the protein kinase superfamily. Ser/Thr protein kinase family.

The catalysed reaction is L-seryl-[protein] + ATP = O-phospho-L-seryl-[protein] + ADP + H(+). It carries out the reaction L-threonyl-[protein] + ATP = O-phospho-L-threonyl-[protein] + ADP + H(+). It catalyses the reaction S-ubiquitinyl-[E2 ubiquitin-conjugating enzyme]-L-cysteine + [acceptor protein]-L-lysine = [E2 ubiquitin-conjugating enzyme]-L-cysteine + N(6)-ubiquitinyl-[acceptor protein]-L-lysine.. It functions in the pathway protein modification; protein ubiquitination. Its function is as follows. Functions as an E3 ubiquitin ligase. This is Putative U-box domain-containing protein 53 (PUB53) from Arabidopsis thaliana (Mouse-ear cress).